The chain runs to 56 residues: Ovomucoid (56 aa).

The Kazal-like domain maps to 6–56 (VDCSDHPKPACLQEQKPICGSDNKTYDNKCSFCNAVVDSNGTLTLSHFGKC). 3 cysteine pairs are disulfide-bonded: cysteine 8–cysteine 38, cysteine 16–cysteine 35, and cysteine 24–cysteine 56. Asparagine 45 is a glycosylation site (N-linked (GlcNAc...) asparagine).

It localises to the secreted. The sequence is that of Ovomucoid from Ortalis vetula (Plain chachalaca).